Reading from the N-terminus, the 340-residue chain is Peroxisomal coenzyme A diphosphatase 1, peroxisomal (340 aa).

The N-terminal 7 residues, 1–7 (MILSQRR), are a transit peptide targeting the peroxisome. A Nudix hydrolase domain is found at 37 to 199 (KRNSAVIILL…DEDVKSYQAE (163 aa)). Positions 77–99 (GKADYFQETFESVARREAEEEIG) match the Nudix box motif. The Mg(2+) site is built by Glu93 and Glu97.

It belongs to the Nudix hydrolase family. PCD1 subfamily. The cofactor is Mn(2+). Mg(2+) is required as a cofactor. In terms of processing, the size of the cleaved transit peptide can be of 7 or 8 residues.

The protein localises to the peroxisome. The enzyme catalyses CoA + H2O = (R)-4'-phosphopantetheine + adenosine 3',5'-bisphosphate + 2 H(+). The catalysed reaction is CoA-disulfide + H2O = 4'-phosphopantetheinyl-CoA disulfide + adenosine 3',5'-bisphosphate + 2 H(+). It carries out the reaction 8-oxo-dGTP + H2O = 8-oxo-dGMP + diphosphate + H(+). It catalyses the reaction 2-oxo-dATP + H2O = 2-oxo-dAMP + diphosphate + H(+). In terms of biological role, diphosphatase (pyrophosphatase) with specificity for coenzyme A and CoA derivatives. Catalyzes the hydrolysis of the diphosphate linkage in CoA to give 3',5'-ADP and 4'-phosphopantetheine. Prefers oxidized CoA disulfide (CoASSCoA) over CoA as a substrate. May be required to remove potentially toxic oxidized CoA disulfide from peroxisomes to maintain the capacity for beta-oxidation of fatty acids. Can also hydrolyze 8-oxo-dGTP and 2-OH-dATP in vitro; therefore it may function as a sanitizing enzyme for oxidized nucleotides and may contribute to prevention of spontaneous mutagenesis due to the misincorporation of these oxidized nucleotides during DNA synthesis. Shows moderate activity in vitro with several short chain acyl-CoA esters and very low activity on 3'-dephospho-CoA while is not active with (deoxy)nucleoside 5'-triphosphates, nucleoside 5'-di- or monophosphates, diadenosine polyphosphates, nucleoside 5'-diphosphosugars, cytidine 5'-diphosphoalcohols, NAD(+), NADH, or FAD. The polypeptide is Peroxisomal coenzyme A diphosphatase 1, peroxisomal (PCD1) (Saccharomyces cerevisiae (strain ATCC 204508 / S288c) (Baker's yeast)).